Here is an 847-residue protein sequence, read N- to C-terminus: Alanine--tRNA ligase (847 aa).

His554, His558, Cys656, and His660 together coordinate Zn(2+).

It belongs to the class-II aminoacyl-tRNA synthetase family. Zn(2+) serves as cofactor.

The protein localises to the cytoplasm. The enzyme catalyses tRNA(Ala) + L-alanine + ATP = L-alanyl-tRNA(Ala) + AMP + diphosphate. In terms of biological role, catalyzes the attachment of alanine to tRNA(Ala) in a two-step reaction: alanine is first activated by ATP to form Ala-AMP and then transferred to the acceptor end of tRNA(Ala). Also edits incorrectly charged Ser-tRNA(Ala) and Gly-tRNA(Ala) via its editing domain. The polypeptide is Alanine--tRNA ligase (Helicobacter pylori (strain J99 / ATCC 700824) (Campylobacter pylori J99)).